A 353-amino-acid chain; its full sequence is 4-hydroxy-2-oxovalerate aldolase 1 (353 aa).

The Pyruvate carboxyltransferase domain occupies 14–266 (VRMTDTSLRD…KTGIDFFDIA (253 aa)). 22-23 (RD) serves as a coordination point for substrate. Asp23 provides a ligand contact to Mn(2+). His26 acts as the Proton acceptor in catalysis. Substrate is bound by residues Ser176 and His205. Mn(2+) is bound by residues His205 and His207. Tyr296 lines the substrate pocket.

It belongs to the 4-hydroxy-2-oxovalerate aldolase family.

It carries out the reaction (S)-4-hydroxy-2-oxopentanoate = acetaldehyde + pyruvate. The polypeptide is 4-hydroxy-2-oxovalerate aldolase 1 (Mycobacterium sp. (strain KMS)).